We begin with the raw amino-acid sequence, 492 residues long: MRKTVVAFAAAIAACSAVLSSTTTSAAPPATPITTLQADGTHLVDGYGRTVLLHGVNNVDKDAPYLPAGETLTPQDIDILVRHGFNTVRLGTSFDALMPQRGQIDEAYLDRLTGVVDALTARGMHVLLDNHQDGLSKAWGGNGFPEWAIESRPREWEPNPGFPLYYLMPSLNAGWDEVWGNTHGALDHLGTALGALAERVEGKPGVMGIELLNEPWPGSRFLSCFPNGCPDFDRTYQAAMQKLTDAVRAQNPTIPVYWEPNVTWNQMMPSNLFAPPVTPALTTADVVFAPHDYCIPSQLAIYLGLPQALRGLCVPQQDLTWSNIDAITERANVPTVITEFGDGDPTVLKNTLARADERFIGWQYWHFGAGNATDPFLGEVGRQLVRTYPQATAGEPGRMIFDADNGDFAYRFTPRAATRPTEIFVSDLHYPDGYAVQVDGGQVTSAPGARIVTVVADGSGPVTVKINRPGSAGAEVPDGPIETSSSGSSGSS.

The N-terminal stretch at 1–14 (MRKTVVAFAAAIAA) is a signal peptide. The N-palmitoyl cysteine moiety is linked to residue Cys15. The S-diacylglycerol cysteine moiety is linked to residue Cys15. Residues Lys61, Asp62, 131-133 (HQD), and 213-214 (NE) each bind substrate. The Proton donor role is filled by Glu214. The cysteines at positions 224 and 229 are disulfide-linked. 3 residues coordinate substrate: Asn265, Gln298, and Tyr302. Cys294 and Cys313 are disulfide-bonded. Glu339 acts as the Nucleophile in catalysis. Trp365 lines the substrate pocket. A disordered region spans residues 467–492 (NRPGSAGAEVPDGPIETSSSGSSGSS).

Belongs to the glycosyl hydrolase 5 (cellulase A) family.

Its subcellular location is the secreted. The protein resides in the membrane. It carries out the reaction an oligoglycosyl-(1-&gt;4)-beta-D-glucosyl-(1&lt;-&gt;1)-ceramide + H2O = an oligoglycosyl-(1-&gt;4)-D-glucose + an N-acyl-sphingoid base. The enzyme catalyses a ganglioside GM3 + H2O = N-acetyl-alpha-neuraminosyl-(2-&gt;3)-beta-D-galactosyl-(1-&gt;4)-D-glucose + an N-acyl-sphingoid base. The catalysed reaction is a ganglioside GM1 + H2O = beta-D-Gal-(1-&gt;3)-beta-D-GalNAc-(1-&gt;4)-[alpha-Neu5Ac-(2-&gt;3)]-beta-D-Gal-(1-&gt;4)-D-Glc + an N-acyl-sphingoid base. It catalyses the reaction a ganglioside Fuc-GM1 + H2O = alpha-Fuc-(1-&gt;2)-beta-Gal-(1-&gt;3)-beta-GalNAc-(1-&gt;4)-[alpha-Neu5Ac-(2-&gt;3)]-beta-Gal-(1-&gt;4)-Glc + an N-acyl-sphingoid base. It carries out the reaction a beta-D-galactosyl-(1-&gt;4)-beta-D-glucosyl-(1&lt;-&gt;1)-ceramide + H2O = lactose + an N-acyl-sphingoid base. Functionally, hydrolyzes glycosphingolipids; exhibits broad substrate specificity including monosialodihexosylganglioside (GM3), monosialotetrahexosylganglioside (GM1), fucosyl-GM1, lactosylceramide, globotriosylceramide, globotetraosylceramide, ganglioside GD1a, and ganglioside GD1b. No activity towards glucosylceramide and galactosylceramide. In Rhodococcus hoagii (strain 103S) (Rhodococcus equi), this protein is Endoglycoceramidase I.